The primary structure comprises 242 residues: Lysosomal membrane ascorbate-dependent ferrireductase CYB561A3 (242 aa).

Topologically, residues 1–7 (MVSGRFY) are cytoplasmic. Residues 8-28 (LSCLLLGSLGSMCILFTIYWM) traverse the membrane as a helical segment. A Cytochrome b561 domain is found at 12 to 219 (LLGSLGSMCI…FGLLVLYILL (208 aa)). Topologically, residues 29–45 (QYWRGGFAWNGSIYMFN) are lumenal. N-linked (GlcNAc...) asparagine glycosylation occurs at Asn38. Residues 46 to 66 (WHPVLMVAGMVVFYGGASLVY) form a helical membrane-spanning segment. Residues His47 and Arg67 each coordinate heme b. At 67-83 (RLPQSWVGPKLPWKLLH) the chain is on the cytoplasmic side. L-ascorbate-binding residues include Lys76 and Lys80. Residue His83 coordinates heme b. The chain crosses the membrane as a helical span at residues 84 to 104 (AALHLMAFVLTVVGLVAVFTF). Topologically, residues 105–119 (HNHGRTANLYSLHSW) are lumenal. Heme b is bound by residues 112–115 (NLYS) and His117. Residues 120–140 (LGITTVFLFACQWFLGFAVFL) form a helical membrane-spanning segment. Topologically, residues 141–154 (LPWASMWLRSLLKP) are cytoplasmic. Position 149 (Arg149) interacts with L-ascorbate. Residues 155 to 175 (IHVFFGAAILSLSIASVISGI) traverse the membrane as a helical segment. His156 and Glu177 together coordinate heme b. The Lumenal portion of the chain corresponds to 176 to 202 (NEKLFFSLKNTTRPYHSLPSEAVFANS). A helical transmembrane segment spans residues 203-223 (TGMLVVAFGLLVLYILLASSW). Lys224 lines the heme b pocket. Residues 224-242 (KRPEPGILTDRQPLLHDGE) are Cytoplasmic-facing.

In terms of assembly, homodimer. It depends on heme b as a cofactor. N-glycosylated.

It localises to the late endosome membrane. The protein resides in the lysosome membrane. The catalysed reaction is Fe(3+)(out) + L-ascorbate(in) = monodehydro-L-ascorbate radical(in) + Fe(2+)(out) + H(+). Transmembrane reductase that uses ascorbate as an electron donor in the cytoplasm and transfers electrons across membranes to reduce iron cations Fe(3+) into Fe(2+) in the lumen of the late endosome and lysosome. Reduced iron can then be extruded from the late endosome and lysosome to the cytoplasm by divalent metal-specific transporters. It is therefore most probably involved in endosomal and lysosomal cellular iron homeostasis. The sequence is that of Lysosomal membrane ascorbate-dependent ferrireductase CYB561A3 from Homo sapiens (Human).